A 445-amino-acid polypeptide reads, in one-letter code: Oxysterols receptor LXR-alpha (445 aa).

Disordered regions lie at residues 1–34 and 63–86; these read MSLWLEASMPDVSPDSATELWKTEPQDAGDQGGN and ALLPRAETLPEPTELRPQKRKKGP. The interval 1-94 is transactivation AF-1; required for ligand-independent transactivation function; the sequence is MSLWLEASMP…GPAPKMLGNE (94 aa). The nuclear receptor DNA-binding region spans 93–168; it reads NELCSVCGDK…AGMREECVLS (76 aa). 2 NR C4-type zinc fingers span residues 96–116 and 132–156; these read CSVCGDKASGFHYNVLSCEGC and CHSGGHCPMDTYMRRKCQECRLRKC. A Phosphoserine modification is found at Ser191. The interval 203-445 is transactivation AF-2; required for ligand-dependent transactivation function; mediates interaction with CCAR2; the sequence is QLSPEQLGMI…LLSEIWDVHE (243 aa). The 239-residue stretch at 207–445 folds into the NR LBD domain; it reads EQLGMIEKLV…LLSEIWDVHE (239 aa).

Belongs to the nuclear hormone receptor family. NR1 subfamily. In terms of assembly, heterodimer of NR1H3 and RXR (retinoic acid receptor). Interacts with CCAR2 (via N-terminus) in a ligand-independent manner. Interacts with SIRT1 and this interaction is inhibited by CCAR2. In terms of processing, ubiquitinated. Ubiquitination by UBR5 leads to its degradation: UBR5 specifically recognizes and binds ligand-bound NR1H3 when it is not associated with coactivators (NCOAs). In presence of NCOAs, the UBR5-degron is not accessible, preventing its ubiquitination and degradation.

Its subcellular location is the nucleus. It localises to the cytoplasm. In terms of biological role, nuclear receptor that exhibits a ligand-dependent transcriptional activation activity. Interaction with retinoic acid receptor (RXR) shifts RXR from its role as a silent DNA-binding partner to an active ligand-binding subunit in mediating retinoid responses through target genes defined by LXRES. LXRES are DR4-type response elements characterized by direct repeats of two similar hexanuclotide half-sites spaced by four nucleotides. Plays an important role in the regulation of cholesterol homeostasis, regulating cholesterol uptake through MYLIP-dependent ubiquitination of LDLR, VLDLR and LRP8. Interplays functionally with RORA for the regulation of genes involved in liver metabolism. Induces LPCAT3-dependent phospholipid remodeling in endoplasmic reticulum (ER) membranes of hepatocytes, driving SREBF1 processing and lipogenesis. Via LPCAT3, triggers the incorporation of arachidonate into phosphatidylcholines of ER membranes, increasing membrane dynamics and enabling triacylglycerols transfer to nascent very low-density lipoprotein (VLDL) particles. Via LPCAT3 also counteracts lipid-induced ER stress response and inflammation, likely by modulating SRC kinase membrane compartmentalization and limiting the synthesis of lipid inflammatory mediators. This is Oxysterols receptor LXR-alpha (Nr1h3) from Mus musculus (Mouse).